An 829-amino-acid polypeptide reads, in one-letter code: DNA ligase (829 aa).

Residues 38–42, 87–88, and Glu-127 each bind NAD(+); these read DAEYD and SL. The active-site N6-AMP-lysine intermediate is the Lys-129. Residues Arg-150, Glu-187, Lys-305, and Lys-329 each contribute to the NAD(+) site. Cys-455, Cys-458, Cys-473, and Cys-479 together coordinate Zn(2+). A disordered region spans residues 534 to 564; the sequence is ETADKGSSENENGDAETVSGDLSKYNTQNGK. A BRCT domain is found at 752–829; sequence GINKAVAGKT…SEAELLTLLC (78 aa).

This sequence belongs to the NAD-dependent DNA ligase family. LigA subfamily. Mg(2+) is required as a cofactor. It depends on Mn(2+) as a cofactor.

The catalysed reaction is NAD(+) + (deoxyribonucleotide)n-3'-hydroxyl + 5'-phospho-(deoxyribonucleotide)m = (deoxyribonucleotide)n+m + AMP + beta-nicotinamide D-nucleotide.. Its function is as follows. DNA ligase that catalyzes the formation of phosphodiester linkages between 5'-phosphoryl and 3'-hydroxyl groups in double-stranded DNA using NAD as a coenzyme and as the energy source for the reaction. It is essential for DNA replication and repair of damaged DNA. The protein is DNA ligase of Neisseria gonorrhoeae (strain ATCC 700825 / FA 1090).